The sequence spans 1042 residues: Probable serine/threonine protein kinase IRE4 (1042 aa).

Composition is skewed to basic and acidic residues over residues Met-1 to Gly-10, Glu-102 to Glu-115, and Gln-314 to Lys-327. Disordered stretches follow at residues Met-1 to Leu-75, Pro-90 to Glu-115, and Trp-297 to Lys-327. Residues Cys-402 to Cys-421 form a C2H2-type; atypical zinc finger. Residues Phe-670–Phe-955 form the Protein kinase domain. Residues Ile-676 to Val-684 and Lys-699 contribute to the ATP site. The Proton acceptor role is filled by Asp-793. The segment at Glu-830–Arg-850 is disordered. Position 854 is a phosphoserine (Ser-854). In terms of domain architecture, AGC-kinase C-terminal spans Gln-956–Phe-1042.

Belongs to the protein kinase superfamily. AGC Ser/Thr protein kinase family.

The enzyme catalyses L-seryl-[protein] + ATP = O-phospho-L-seryl-[protein] + ADP + H(+). It catalyses the reaction L-threonyl-[protein] + ATP = O-phospho-L-threonyl-[protein] + ADP + H(+). The polypeptide is Probable serine/threonine protein kinase IRE4 (Arabidopsis thaliana (Mouse-ear cress)).